Consider the following 272-residue polypeptide: Shikimate dehydrogenase (NADP(+)) (272 aa).

Shikimate is bound by residues 14-16 and T61; that span reads SKS. Residue K65 is the Proton acceptor of the active site. E77 serves as a coordination point for NADP(+). Shikimate-binding residues include N86 and D102. NADP(+) is bound by residues 126–130, 149–154, and M213; these read GAGGA and NRTVSR. Residue Y215 coordinates shikimate. G237 provides a ligand contact to NADP(+).

This sequence belongs to the shikimate dehydrogenase family. As to quaternary structure, homodimer.

It carries out the reaction shikimate + NADP(+) = 3-dehydroshikimate + NADPH + H(+). The protein operates within metabolic intermediate biosynthesis; chorismate biosynthesis; chorismate from D-erythrose 4-phosphate and phosphoenolpyruvate: step 4/7. Its function is as follows. Involved in the biosynthesis of the chorismate, which leads to the biosynthesis of aromatic amino acids. Catalyzes the reversible NADPH linked reduction of 3-dehydroshikimate (DHSA) to yield shikimate (SA). The chain is Shikimate dehydrogenase (NADP(+)) from Shigella boydii serotype 4 (strain Sb227).